The following is a 702-amino-acid chain: Pheromone-processing carboxypeptidase KEX1 (702 aa).

The signal sequence occupies residues 1–19; the sequence is MKLILSTLIVFIHTLLVSA. At 20–555 the chain is on the lumenal side; the sequence is LPTKEGSDPN…SDSTSSKFTR (536 aa). 2 N-linked (GlcNAc...) asparagine glycosylation sites follow: Asn85 and Asn122. Catalysis depends on residues Ser184 and Asp394. 2 N-linked (GlcNAc...) asparagine glycosylation sites follow: Asn441 and Asn449. The active site involves His452. A disordered region spans residues 491-548; sequence SRKESDASADGEENAGSDKVPGDSPSQTIDPMISSSTASSSSVESSLSSSTASADSDS. Residues 524 to 548 show a composition bias toward low complexity; the sequence is SSSTASSSSVESSLSSSTASADSDS. A helical transmembrane segment spans residues 556–576; the sequence is LIQLAVILVIFWGVYVLYASY. At 577-702 the chain is on the cytoplasmic side; that stretch reads KSRPSSIIKK…THNQKQKPMN (126 aa). Disordered stretches follow at residues 582-603 and 660-702; these read SIIKKPTNNTSNVTRSSAGKKK and IELG…KPMN. 2 stretches are compositionally biased toward polar residues: residues 587-598 and 692-702; these read PTNNTSNVTRSS and ATHNQKQKPMN.

This sequence belongs to the peptidase S10 family.

It is found in the golgi apparatus. The protein localises to the trans-Golgi network membrane. The enzyme catalyses Preferential release of a C-terminal arginine or lysine residue.. Functionally, protease with a carboxypeptidase B-like function involved in the C-terminal processing of the lysine and arginine residues from protein precursors. Promotes cell fusion and is involved in the programmed cell death. This chain is Pheromone-processing carboxypeptidase KEX1 (KEX1), found in Candida albicans (strain SC5314 / ATCC MYA-2876) (Yeast).